We begin with the raw amino-acid sequence, 190 residues long: Crossover junction endodeoxyribonuclease RuvC (190 aa).

Residues D7, E68, and D141 contribute to the active site. Residues D7, E68, and D141 each contribute to the Mg(2+) site.

Belongs to the RuvC family. As to quaternary structure, homodimer which binds Holliday junction (HJ) DNA. The HJ becomes 2-fold symmetrical on binding to RuvC with unstacked arms; it has a different conformation from HJ DNA in complex with RuvA. In the full resolvosome a probable DNA-RuvA(4)-RuvB(12)-RuvC(2) complex forms which resolves the HJ. The cofactor is Mg(2+).

It is found in the cytoplasm. The enzyme catalyses Endonucleolytic cleavage at a junction such as a reciprocal single-stranded crossover between two homologous DNA duplexes (Holliday junction).. The RuvA-RuvB-RuvC complex processes Holliday junction (HJ) DNA during genetic recombination and DNA repair. Endonuclease that resolves HJ intermediates. Cleaves cruciform DNA by making single-stranded nicks across the HJ at symmetrical positions within the homologous arms, yielding a 5'-phosphate and a 3'-hydroxyl group; requires a central core of homology in the junction. The consensus cleavage sequence is 5'-(A/T)TT(C/G)-3'. Cleavage occurs on the 3'-side of the TT dinucleotide at the point of strand exchange. HJ branch migration catalyzed by RuvA-RuvB allows RuvC to scan DNA until it finds its consensus sequence, where it cleaves and resolves the cruciform DNA. The sequence is that of Crossover junction endodeoxyribonuclease RuvC from Endomicrobium trichonymphae.